The following is a 451-amino-acid chain: Type 3 secretion system ATPase (451 aa).

Gly-184–Thr-189 contributes to the ATP binding site.

It belongs to the ATPase alpha/beta chains family. T3SS ATPase subfamily. The core secretion machinery of the T3SS is composed of approximately 20 different proteins, including cytoplasmic components, a base, an export apparatus and a needle. This subunit is part of the cytosolic complex. Forms homohexamers.

It localises to the cytoplasm. The enzyme catalyses ATP + H2O + cellular proteinSide 1 = ADP + phosphate + cellular proteinSide 2.. Functionally, ATPase component of the type III secretion system (T3SS), also called injectisome, which is used to inject bacterial effector proteins into eukaryotic host cells. Acts as a molecular motor to provide the energy that is required for the export of proteins. Required for type III secretion apparatus (T3SA) formation, proper protein secretion, host cell invasion and virulence. May play a critical role in T3SS substrate recognition, disassembly of the effector/chaperone complex and unfolding of the effector in an ATP-dependent manner prior to secretion. This chain is Type 3 secretion system ATPase, found in Sinorhizobium fredii (strain NBRC 101917 / NGR234).